The following is an 830-amino-acid chain: Leucine--tRNA ligase (830 aa).

Residues 34–44 (PYPSGNIHMGH) carry the 'HIGH' region motif. The 'KMSKS' region signature appears at 592–596 (KMSKS). Lysine 595 contacts ATP.

It belongs to the class-I aminoacyl-tRNA synthetase family.

The protein localises to the cytoplasm. The enzyme catalyses tRNA(Leu) + L-leucine + ATP = L-leucyl-tRNA(Leu) + AMP + diphosphate. The chain is Leucine--tRNA ligase from Ehrlichia ruminantium (strain Welgevonden).